Consider the following 309-residue polypeptide: Homoserine O-succinyltransferase (309 aa).

The active-site Acyl-thioester intermediate is the C142. 2 residues coordinate substrate: K163 and S192. The active-site Proton acceptor is H235. Residue E237 is part of the active site. R249 is a substrate binding site.

The protein belongs to the MetA family. As to quaternary structure, homodimer.

It localises to the cytoplasm. The catalysed reaction is L-homoserine + succinyl-CoA = O-succinyl-L-homoserine + CoA. Its pathway is amino-acid biosynthesis; L-methionine biosynthesis via de novo pathway; O-succinyl-L-homoserine from L-homoserine: step 1/1. Functionally, transfers a succinyl group from succinyl-CoA to L-homoserine, forming succinyl-L-homoserine. This Escherichia coli O157:H7 protein is Homoserine O-succinyltransferase.